Consider the following 365-residue polypeptide: Aminomethyltransferase (365 aa).

It belongs to the GcvT family. In terms of assembly, the glycine cleavage system is composed of four proteins: P, T, L and H.

The catalysed reaction is N(6)-[(R)-S(8)-aminomethyldihydrolipoyl]-L-lysyl-[protein] + (6S)-5,6,7,8-tetrahydrofolate = N(6)-[(R)-dihydrolipoyl]-L-lysyl-[protein] + (6R)-5,10-methylene-5,6,7,8-tetrahydrofolate + NH4(+). Its function is as follows. The glycine cleavage system catalyzes the degradation of glycine. The protein is Aminomethyltransferase of Erwinia tasmaniensis (strain DSM 17950 / CFBP 7177 / CIP 109463 / NCPPB 4357 / Et1/99).